A 222-amino-acid polypeptide reads, in one-letter code: Octanoyltransferase (222 aa).

Positions 34 to 214 (AEAPSTVLLL…EFRKHEEALV (181 aa)) constitute a BPL/LPL catalytic domain. Residues 72–79 (RGGKLTWH), 144–146 (AIG), and 157–159 (GIA) each bind substrate. Catalysis depends on Cys-175, which acts as the Acyl-thioester intermediate.

It belongs to the LipB family.

It localises to the cytoplasm. The enzyme catalyses octanoyl-[ACP] + L-lysyl-[protein] = N(6)-octanoyl-L-lysyl-[protein] + holo-[ACP] + H(+). It functions in the pathway protein modification; protein lipoylation via endogenous pathway; protein N(6)-(lipoyl)lysine from octanoyl-[acyl-carrier-protein]: step 1/2. Its function is as follows. Catalyzes the transfer of endogenously produced octanoic acid from octanoyl-acyl-carrier-protein onto the lipoyl domains of lipoate-dependent enzymes. Lipoyl-ACP can also act as a substrate although octanoyl-ACP is likely to be the physiological substrate. The sequence is that of Octanoyltransferase from Arthrobacter sp. (strain FB24).